The chain runs to 358 residues: Protein RecA 2 (358 aa).

ATP is bound at residue 69-76 (GPESSGKT). Residues 331 to 358 (GIGKSGAPSPRRRTSPRRPKVAARSAAV) are disordered. Residues 340–351 (PRRRTSPRRPKV) are compositionally biased toward basic residues.

The protein belongs to the RecA family.

The protein resides in the cytoplasm. In terms of biological role, can catalyze the hydrolysis of ATP in the presence of single-stranded DNA, the ATP-dependent uptake of single-stranded DNA by duplex DNA, and the ATP-dependent hybridization of homologous single-stranded DNAs. It interacts with LexA causing its activation and leading to its autocatalytic cleavage. This chain is Protein RecA 2, found in Myxococcus xanthus.